The primary structure comprises 220 residues: Ribosome maturation factor RimP (220 aa).

The span at 1 to 15 (MSQRGRATRPTGPTG) shows a compositional bias: low complexity. Disordered regions lie at residues 1-35 (MSQR…GGDL) and 184-220 (PGRV…GEER). Positions 198 to 220 (DGADGADEAGDFDDDDDVEGEER) are enriched in acidic residues.

It belongs to the RimP family.

Its subcellular location is the cytoplasm. In terms of biological role, required for maturation of 30S ribosomal subunits. In Salinispora tropica (strain ATCC BAA-916 / DSM 44818 / JCM 13857 / NBRC 105044 / CNB-440), this protein is Ribosome maturation factor RimP.